The following is a 316-amino-acid chain: Endochitinase WIN8 (316 aa).

The signal sequence occupies residues 1 to 23 (MRFWALTVLSLLLSLLLGVSSDT). Residues 24 to 64 (AQCGSQAGNATCPNDLCCSSGGYCGLTVAYCCAGCVSQCRN) enclose the Chitin-binding type-1 domain. Disulfide bonds link C26-C41, C35-C47, C40-C54, C58-C62, C84-C146, C158-C168, and C266-C298. The active-site Proton donor is E128.

Belongs to the glycosyl hydrolase 19 family. Chitinase class I subfamily.

It catalyses the reaction Random endo-hydrolysis of N-acetyl-beta-D-glucosaminide (1-&gt;4)-beta-linkages in chitin and chitodextrins.. Defense against chitin-containing fungal pathogens. The polypeptide is Endochitinase WIN8 (WIN8) (Populus trichocarpa (Western balsam poplar)).